A 285-amino-acid polypeptide reads, in one-letter code: Transmembrane protein 158 (285 aa).

Residues 1–20 form the signal peptide; sequence MLPLLAALLAAACPLPPARG. The tract at residues 20-43 is disordered; sequence GGATDAPGLSGTPPNASANASFTG. The segment covering 31 to 43 has biased composition (polar residues); the sequence is TPPNASANASFTG. N-linked (GlcNAc...) asparagine glycosylation is present at Asn73. The next 2 helical transmembrane spans lie at 215–235 and 263–283; these read LVIVVWSVAALIWPVPIIAGF and AAAAAAAAAAAAAAAVTSGVA.

It belongs to the TMEM158 family. In terms of processing, N-glycosylated. In terms of tissue distribution, detected only in the brain.

The protein resides in the membrane. In terms of biological role, receptor for brain injury-derived neurotrophic peptide (BINP), a synthetic 13-mer peptide. The polypeptide is Transmembrane protein 158 (Tmem158) (Rattus norvegicus (Rat)).